The following is a 1960-amino-acid chain: Zinc finger protein 638 (1960 aa).

The disordered stretch occupies residues 1–137 (MSRPRFNPRG…SPKVQSRYTK (137 aa)). The segment covering 19–31 (APNPPGMRPPGPF) has biased composition (pro residues). R47, R49, and R54 each carry asymmetric dimethylarginine. Residues 60-75 (SYQNMGPQRMNVQVTQ) are compositionally biased toward polar residues. The span at 76–89 (HRTDPRLTKEKLDF) shows a compositional bias: basic and acidic residues. Polar residues predominate over residues 117–137 (KQSSVTQVTEQSPKVQSRYTK). Phosphoserine occurs at positions 128 and 288. A Glycyl lysine isopeptide (Lys-Gly) (interchain with G-Cter in SUMO2) cross-link involves residue K291. Phosphoserine is present on residues S298, S367, S381, and S418. The interval 352 to 373 (KSVISSADAHGGPTESKKDYQS) is disordered. 3 disordered regions span residues 463–673 (NPEI…QSLS), 749–804 (PGKK…STVK), and 827–899 (KASI…KESE). Residues 468–483 (PSRRNESNRKENETPR) show a composition bias toward basic and acidic residues. An involved in localization to nuclear speckles region spans residues 470–573 (RRNESNRKEN…ERTSRKSVRS (104 aa)). Residues 484–556 (RRSHSPSPRH…SRNLLRRSPK (73 aa)) are compositionally biased toward basic residues. At S554 the chain carries Phosphoserine. Basic and acidic residues-rich tracts occupy residues 565-583 (RTSR…EDGG) and 591-602 (EVTKQKHTETVD). A phosphoserine mark is found at S606 and S615. Positions 618–628 (KPSAKSLSSVK) are enriched in low complexity. S637 bears the Phosphoserine mark. The RRM 1 domain maps to 676–751 (SILLVSELPE…KSVKVCVPGK (76 aa)). The span at 755 to 782 (QNKEMKKKPSDIKKSSASALKKETDASK) shows a compositional bias: basic and acidic residues. A Glycyl lysine isopeptide (Lys-Gly) (interchain with G-Cter in SUMO2) cross-link involves residue K775. A compositionally biased stretch (low complexity) spans 783–802 (TMETVSSSSSAKSGQIKSST). 3 stretches are compositionally biased toward basic and acidic residues: residues 838–854 (KSLE…KDSN), 867–879 (ASSE…KSAE), and 888–899 (ATEKEPVNKESE). The RRM 2 domain maps to 902–976 (SVVFISNLPN…NQLSISMAPE (75 aa)). Basic and acidic residues predominate over residues 1082 to 1092 (SEVQRKNDLEL). 5 disordered regions span residues 1082-1151 (SEVQ…EEPK), 1396-1420 (TVVS…PKPV), 1442-1462 (TRSG…GVNR), 1484-1527 (TKQS…KSKE), and 1550-1583 (PSQA…KGKT). Phosphoserine is present on S1099. The segment covering 1140–1151 (VHQEELGKEEPK) has biased composition (basic and acidic residues). Residues 1399–1409 (SSPKAKSTPSK) show a composition bias toward low complexity. At S1400 the chain carries Phosphoserine. Polar residues predominate over residues 1442 to 1459 (TRSGLAESNSKSKPTQIG). Basic and acidic residues-rich tracts occupy residues 1484–1503 (TKQS…DDSN) and 1518–1527 (TTDRSSKSKE). Phosphoserine occurs at positions 1635 and 1661. Disordered stretches follow at residues 1763-1898 (EVGD…SDVP) and 1930-1960 (KSTR…RSSR). Residues 1772–1790 (NDSKVELARGKIEHHTDKK) are compositionally biased toward basic and acidic residues. A Glycyl lysine isopeptide (Lys-Gly) (interchain with G-Cter in SUMO2) cross-link involves residue K1804. Residues 1806 to 1818 (DSFSQVGPGSETV) are compositionally biased toward polar residues. Basic and acidic residues predominate over residues 1819-1831 (TQKDLKTMPERHL). At S1864 the chain carries Phosphoserine. Basic and acidic residues predominate over residues 1870 to 1885 (AELKDSEPDEKRRKTQ). The Matrin-type zinc finger occupies 1876–1906 (EPDEKRRKTQDSSVGKSMTSDVPGDLDFLVP). A compositionally biased stretch (polar residues) spans 1886-1895 (DSSVGKSMTS). Over residues 1936–1960 (QNTEKFMAKQRKEKEQNETEERSSR) the composition is skewed to basic and acidic residues.

In terms of assembly, interacts with FHL2. Interacts with CEBPA, CEBPD and CEBPG. Interacts with MPHOSPH8 and TASOR components of the HUSH complex; leading to recruitment of the HUSH complex. Interacts with SETDB1. Interacts with HDAC1. Interacts with HDAC4.

The protein resides in the nucleus speckle. Transcription factor that binds to cytidine clusters in double-stranded DNA. Plays a key role in the silencing of unintegrated retroviral DNA: some part of the retroviral DNA formed immediately after infection remains unintegrated in the host genome and is transcriptionally repressed. Mediates transcriptional repression of unintegrated viral DNA by specifically binding to the cytidine clusters of retroviral DNA and mediating the recruitment of chromatin silencers, such as the HUSH complex, SETDB1 and the histone deacetylases HDAC1 and HDAC4. Acts as an early regulator of adipogenesis by acting as a transcription cofactor of CEBPs (CEBPA, CEBPD and/or CEBPG), controlling the expression of PPARG and probably of other proadipogenic genes, such as SREBF1. May also regulate alternative splicing of target genes during adipogenesis. The sequence is that of Zinc finger protein 638 from Mus musculus (Mouse).